The primary structure comprises 285 residues: 2-dehydro-3-deoxyphosphooctonate aldolase (285 aa).

It belongs to the KdsA family.

The protein localises to the cytoplasm. It catalyses the reaction D-arabinose 5-phosphate + phosphoenolpyruvate + H2O = 3-deoxy-alpha-D-manno-2-octulosonate-8-phosphate + phosphate. It participates in carbohydrate biosynthesis; 3-deoxy-D-manno-octulosonate biosynthesis; 3-deoxy-D-manno-octulosonate from D-ribulose 5-phosphate: step 2/3. The protein operates within bacterial outer membrane biogenesis; lipopolysaccharide biosynthesis. The sequence is that of 2-dehydro-3-deoxyphosphooctonate aldolase from Bordetella parapertussis (strain 12822 / ATCC BAA-587 / NCTC 13253).